The chain runs to 69 residues: uncharacterized protein (69 aa).

Residues 13 to 35 (IRSINPTLLNFINYFLLIVPQFI) traverse the membrane as a helical segment.

It is found in the membrane. This is an uncharacterized protein from Saccharomyces cerevisiae (strain ATCC 204508 / S288c) (Baker's yeast).